The following is a 113-amino-acid chain: Cell division topological specificity factor (113 aa).

This sequence belongs to the MinE family.

Its function is as follows. Prevents the cell division inhibition by proteins MinC and MinD at internal division sites while permitting inhibition at polar sites. This ensures cell division at the proper site by restricting the formation of a division septum at the midpoint of the long axis of the cell. This chain is Cell division topological specificity factor, found in Methylobacterium radiotolerans (strain ATCC 27329 / DSM 1819 / JCM 2831 / NBRC 15690 / NCIMB 10815 / 0-1).